The following is a 306-amino-acid chain: Ribonucleoside-diphosphate reductase small subunit (306 aa).

Positions 66, 96, and 99 each coordinate Fe cation. Residue Tyr103 is part of the active site. Residues 153 to 173 (ILMILIEGIFFVSSFAAIAYL) form a helical membrane-spanning segment. 3 residues coordinate Fe cation: Glu159, Glu193, and His196.

It belongs to the ribonucleoside diphosphate reductase small chain family. Heterotetramer composed of a homodimer of the large subunit (R1) and a homodimer of the small subunit (R2). Larger multisubunit protein complex are also active, composed of (R1)n(R2)n. It depends on Fe cation as a cofactor.

The protein resides in the host membrane. The catalysed reaction is a 2'-deoxyribonucleoside 5'-diphosphate + [thioredoxin]-disulfide + H2O = a ribonucleoside 5'-diphosphate + [thioredoxin]-dithiol. Ribonucleoside-diphosphate reductase holoenzyme provides the precursors necessary for viral DNA synthesis. Allows virus growth in non-dividing cells, as well as reactivation from latency in infected hosts. Catalyzes the biosynthesis of deoxyribonucleotides from the corresponding ribonucleotides. In Varicella-zoster virus (strain Dumas) (HHV-3), this protein is Ribonucleoside-diphosphate reductase small subunit.